Reading from the N-terminus, the 129-residue chain is MELVNIFLETDAGRVKFAIKNTDDVCASELINKFVELLSEYIHIDQSEFYLVVKDKDIFYFKCDRGSISIVNNEFYVFDEPLLFVKDFTNVTGVEFIVTETMPCRIIPKNNHAVISVVTNHKFYNGLSL.

This sequence belongs to the orthopoxvirus OPG073 family.

It localises to the virion. The sequence is that of Core protein OPG073 (OPG073) from Homo sapiens (Human).